Here is a 706-residue protein sequence, read N- to C-terminus: Solute carrier organic anion transporter family member 6C1 (706 aa).

A disordered region spans residues 1–24 (MAHVRNKKSDDKKAMVVAKEDTNK). The Cytoplasmic portion of the chain corresponds to 1-94 (MAHVRNKKSD…PFVQRFNNID (94 aa)). A compositionally biased stretch (basic and acidic residues) spans 7–24 (KKSDDKKAMVVAKEDTNK). The helical transmembrane segment at 95–118 (GFMTLYVAAVLIHGALFAVVDMTL) threads the bilayer. Topologically, residues 119–130 (NIYQVQFSLTRT) are extracellular. The helical transmembrane segment at 131–151 (EWYLMDFSDYIASFVVAIIIA) threads the bilayer. Topologically, residues 152 to 159 (HFGSKGNR) are cytoplasmic. The chain crosses the membrane as a helical span at residues 160 to 180 (TRWIAASCILMGLESMLFAFP). The Extracellular portion of the chain corresponds to 181–218 (FFTYEIIIPGRQSIELCMEENEKRNIICGNSVPNRSKC). N-linked (GlcNAc...) asparagine glycosylation occurs at N214. A helical membrane pass occupies residues 219–241 (IYFHIAGQCIHGIAGMPIYILGI). Residues 242-253 (TFIFDHIPTSSC) lie on the Cytoplasmic side of the membrane. Residues 254–277 (GFYLAIGHSAYLIGYLLGMVGGLQ) traverse the membrane as a helical segment. The Extracellular portion of the chain corresponds to 278-301 (NFQPPPKEKTVEIEPAKVYQLLQS). The chain crosses the membrane as a helical span at residues 302 to 324 (GWWKTFLIIAAISFCVSFMMVCF). Residues 325-374 (PTSLPGAHKLRLAKRKEPPTIDRRLKDMKIQPHLKGFLHNIWHILKNPLM) are Cytoplasmic-facing. The chain crosses the membrane as a helical span at residues 375–396 (LTQAICKVSEYLTFNTSLYFLP). The Extracellular segment spans residues 397 to 410 (HHLQTQFLITPGIA). The helical transmembrane segment at 411 to 432 (SLLTGAFVLPGGIIGHFLGGLI) threads the bilayer. Over 433–445 (VDRLEMTNKNKLK) the chain is Cytoplasmic. The chain crosses the membrane as a helical span at residues 446 to 466 (FTLVTTVVSVGLFLLIFFVEC). Topologically, residues 467-565 (QTTTFAGINE…IAGTCDSDCL (99 aa)) are extracellular. One can recognise a Kazal-like domain in the interval 485–540 (GNLTADCNEYCDCTTSLYTSICGRDEKEYFSPCFAGCKATKVSQTEKTYYNCSCIK). N-linked (GlcNAc...) asparagine glycosylation is present at N486. Disulfide bonds link C491/C521, C497/C517, and C506/C538. A glycan (N-linked (GlcNAc...) asparagine) is linked at N535. A helical transmembrane segment spans residues 566 to 589 (KLPLFFAFYFSATVFSNMCSIPVI). The Cytoplasmic segment spans residues 590 to 604 (SIILQSVPANFTSLS). Residues 605 to 624 (LGVTYAIVKFVASVPAPLLF) traverse the membrane as a helical segment. Residues 625-652 (RLSSAIACIYWDNNRCGGKERCWIYNKN) lie on the Extracellular side of the membrane. A helical transmembrane segment spans residues 653–675 (ILVYEFMGIWMSSQLIIVLLNIY). Residues 676–706 (AIQIHDVVVHGEITESKTTVKDVKEQKERKA) lie on the Cytoplasmic side of the membrane.

It belongs to the organo anion transporter (TC 2.A.60) family. In terms of assembly, component of the CatSper complex or CatSpermasome composed of the core pore-forming members CATSPER1, CATSPER2, CATSPER3 and CATSPER4 as well as auxiliary members CATSPERB, CATSPERG2, CATSPERD, CATSPERE, CATSPERZ, C2CD6/CATSPERT, SLCO6C1, TMEM249, TMEM262 and EFCAB9. HSPA1 may be an additional auxiliary complex member. The core complex members CATSPER1, CATSPER2, CATSPER3 and CATSPER4 form a heterotetrameric channel. The auxiliary CATSPERB, CATSPERG2, CATSPERD and CATSPERE subunits form a pavilion-like structure over the pore which stabilizes the complex through interactions with CATSPER4, CATSPER3, CATSPER1 and CATSPER2 respectively. SLCO6C1 interacts with CATSPERE and TMEM262/CATSPERH interacts with CATSPERB, further stabilizing the complex. C2CD6/CATSPERT interacts at least with CATSPERD and is required for targeting the CatSper complex in the flagellar membrane.

Its subcellular location is the cell projection. The protein resides in the cilium. It is found in the flagellum membrane. Auxiliary component of the CatSper complex, a complex involved in sperm cell hyperactivation. This chain is Solute carrier organic anion transporter family member 6C1, found in Mus musculus (Mouse).